We begin with the raw amino-acid sequence, 481 residues long: MITIERVLEILKADANFRHIKQNDQTDSTWTDVQFDALSYDSRTVSPMTLFFAKGLAFKKEFLEKAIEAGLAFYVSEINYEVGIPAIIVHDIKQAMSLIAMEFHGHPQKQLKLLAFTGTKGKTTAAYFAFNILKQSKKPAMLSTMNTTLDGKTFFKSTLTTPESLDLFAMMAEAVKNGMTHLIMEVSSQAYLVKRVYGLTFDVGVFLNISPDHIGPIEHPTFEDYFYHKRLLMDNSRAVIVNAGMDHFEVVKEQVSSKDHDFYGPTSENQISQSAGFDFTATGKLAGHYDIQLIGGFNQENAIAAGLACLRLGASLEDIHTGIAQTNVPGRMEVLTQQNGAKVFVDYAHNGDSVKKLIDVVLEHQTGKVFLILGAPGNKGESRRKDFGLLLNDYPQIEVILTADDPNREDPAAIAEQIRAHMTRTSNFILDREEAIRTAMSQTSSPKDAVIIAGKGADAYQIVNGEKAAYDGDLEVAKQYL.

Ser-42 is a binding site for UDP-N-acetyl-alpha-D-muramoyl-L-alanyl-D-glutamate. 118–124 (GTKGKTT) contributes to the ATP binding site. UDP-N-acetyl-alpha-D-muramoyl-L-alanyl-D-glutamate contacts are provided by residues 160–161 (TT), Ser-187, and Arg-195. Lys-229 bears the N6-carboxylysine mark. The L-lysine recognition motif motif lies at 404 to 407 (DDPN).

This sequence belongs to the MurCDEF family. MurE subfamily. Carboxylation is probably crucial for Mg(2+) binding and, consequently, for the gamma-phosphate positioning of ATP.

The protein localises to the cytoplasm. The catalysed reaction is UDP-N-acetyl-alpha-D-muramoyl-L-alanyl-D-glutamate + L-lysine + ATP = UDP-N-acetyl-alpha-D-muramoyl-L-alanyl-gamma-D-glutamyl-L-lysine + ADP + phosphate + H(+). It functions in the pathway cell wall biogenesis; peptidoglycan biosynthesis. Its function is as follows. Catalyzes the addition of L-lysine to the nucleotide precursor UDP-N-acetylmuramoyl-L-alanyl-D-glutamate (UMAG) in the biosynthesis of bacterial cell-wall peptidoglycan. This Streptococcus suis (strain 98HAH33) protein is UDP-N-acetylmuramoyl-L-alanyl-D-glutamate--L-lysine ligase.